We begin with the raw amino-acid sequence, 561 residues long: Zinc finger protein with KRAB and SCAN domains 1 (561 aa).

Residues Met1–Asp51 are disordered. Phosphoserine is present on Ser13. Residue Lys27 forms a Glycyl lysine isopeptide (Lys-Gly) (interchain with G-Cter in SUMO2) linkage. The SCAN box domain maps to Arg56–Leu138. The disordered stretch occupies residues Val163–Arg187. The segment covering His178–Arg187 has biased composition (basic residues). Residues Lys180 and Lys226 each participate in a glycyl lysine isopeptide (Lys-Gly) (interchain with G-Cter in SUMO2) cross-link. The KRAB domain maps to Val225 to Gln304. Polar residues predominate over residues Asn260–Thr275. The segment at Asn260–Ala372 is disordered. 2 stretches are compositionally biased toward basic and acidic residues: residues Ser276–Ser286 and Phe294–Lys349. Residues Lys277, Lys296, Lys301, and Lys336 each participate in a glycyl lysine isopeptide (Lys-Gly) (interchain with G-Cter in SUMO2) cross-link. The segment covering Phe355 to Pro365 has biased composition (polar residues). Residue Lys373 forms a Glycyl lysine isopeptide (Lys-Gly) (interchain with G-Cter in SUMO2) linkage. C2H2-type zinc fingers lie at residues His375–His397, Tyr403–His425, His431–His453, Tyr459–His481, Tyr487–His509, and Tyr515–His537. Glycyl lysine isopeptide (Lys-Gly) (interchain with G-Cter in SUMO2) cross-links involve residues Lys410, Lys438, and Lys476. A Glycyl lysine isopeptide (Lys-Gly) (interchain with G-Cter in SUMO2) cross-link involves residue Lys558.

It belongs to the krueppel C2H2-type zinc-finger protein family.

Its subcellular location is the nucleus. In terms of biological role, may be involved in transcriptional regulation. The protein is Zinc finger protein with KRAB and SCAN domains 1 (Zkscan1) of Mus musculus (Mouse).